Reading from the N-terminus, the 235-residue chain is Exosome complex component Rrp4 (235 aa).

Residues 67–139 (GDVVIGLIQS…KTRSPLLTVQ (73 aa)) enclose the S1 motif domain. The KH domain occupies 149-205 (GKIVEISPAKVPRVIGRKMSMLKTLEEKTECKIFVARNGRIHLECPNEDLEAIAVMA).

The protein belongs to the RRP4 family. As to quaternary structure, component of the archaeal exosome complex. Forms a trimer of Rrp4 and/or Csl4 subunits. The trimer associates with a hexameric ring-like arrangement composed of 3 Rrp41-Rrp42 heterodimers.

It is found in the cytoplasm. In terms of biological role, non-catalytic component of the exosome, which is a complex involved in RNA degradation. Increases the RNA binding and the efficiency of RNA degradation. Confers strong poly(A) specificity to the exosome. In Aeropyrum pernix (strain ATCC 700893 / DSM 11879 / JCM 9820 / NBRC 100138 / K1), this protein is Exosome complex component Rrp4.